Here is a 178-residue protein sequence, read N- to C-terminus: Interleukin-10 (178 aa).

Residues 1–18 form the signal peptide; the sequence is MHSSALLCCLVLLTGVRA. 2 disulfide bridges follow: C30-C126 and C80-C132. N-linked (GlcNAc...) asparagine glycosylation occurs at N134.

Belongs to the IL-10 family. Homodimer. Interacts with IL10RA and IL10RB.

The protein localises to the secreted. Its function is as follows. Major immune regulatory cytokine that acts on many cells of the immune system where it has profound anti-inflammatory functions, limiting excessive tissue disruption caused by inflammation. Mechanistically, IL10 binds to its heterotetrameric receptor comprising IL10RA and IL10RB leading to JAK1 and STAT2-mediated phosphorylation of STAT3. In turn, STAT3 translocates to the nucleus where it drives expression of anti-inflammatory mediators. Targets antigen-presenting cells (APCs) such as macrophages and monocytes and inhibits their release of pro-inflammatory cytokines including granulocyte-macrophage colony-stimulating factor /GM-CSF, granulocyte colony-stimulating factor/G-CSF, IL-1 alpha, IL-1 beta, IL-6, IL-8 and TNF-alpha. Also interferes with antigen presentation by reducing the expression of MHC-class II and co-stimulatory molecules, thereby inhibiting their ability to induce T cell activation. In addition, controls the inflammatory response of macrophages by reprogramming essential metabolic pathways including mTOR signaling. The chain is Interleukin-10 (IL10) from Macaca nemestrina (Pig-tailed macaque).